The chain runs to 319 residues: ATP-dependent 6-phosphofructokinase (319 aa).

An ATP-binding site is contributed by glycine 11. 21 to 25 (RAVVR) lines the ADP pocket. ATP contacts are provided by residues 72 to 73 (RY) and 102 to 105 (GDGS). Position 103 (aspartate 103) interacts with Mg(2+). Residue 125–127 (TID) coordinates substrate. The active-site Proton acceptor is the aspartate 127. ADP is bound at residue arginine 154. Substrate-binding positions include arginine 162 and 169-171 (MGR). Residues 185-187 (GAE), arginine 211, and 213-215 (KKH) each bind ADP. Substrate contacts are provided by residues glutamate 222, arginine 243, and 249–252 (HVQR).

It belongs to the phosphofructokinase type A (PFKA) family. ATP-dependent PFK group I subfamily. Prokaryotic clade 'B1' sub-subfamily. As to quaternary structure, homotetramer. Mg(2+) serves as cofactor.

The protein localises to the cytoplasm. It catalyses the reaction beta-D-fructose 6-phosphate + ATP = beta-D-fructose 1,6-bisphosphate + ADP + H(+). Its pathway is carbohydrate degradation; glycolysis; D-glyceraldehyde 3-phosphate and glycerone phosphate from D-glucose: step 3/4. Its activity is regulated as follows. Allosterically activated by ADP and other diphosphonucleosides, and allosterically inhibited by phosphoenolpyruvate. Functionally, catalyzes the phosphorylation of D-fructose 6-phosphate to fructose 1,6-bisphosphate by ATP, the first committing step of glycolysis. This Listeria welshimeri serovar 6b (strain ATCC 35897 / DSM 20650 / CCUG 15529 / CIP 8149 / NCTC 11857 / SLCC 5334 / V8) protein is ATP-dependent 6-phosphofructokinase.